Consider the following 327-residue polypeptide: Zinc transport protein ZntB (327 aa).

Residues 1 to 271 (MESFAGKELQ…AMNRRTYTMS (271 aa)) lie on the Cytoplasmic side of the membrane. A helical transmembrane segment spans residues 272-292 (LLAMVFLPTTFLTGLFGVNLG). The Periplasmic segment spans residues 293–300 (GIPGGDAP). The helical transmembrane segment at 301–321 (FGFFTFCLMLVILVGGVAWWL) threads the bilayer. The Cytoplasmic portion of the chain corresponds to 322–327 (KRSKWL).

It belongs to the CorA metal ion transporter (MIT) (TC 1.A.35) family.

The protein resides in the cell inner membrane. It catalyses the reaction Zn(2+)(out) + H(+)(out) = Zn(2+)(in) + H(+)(in). Zinc transporter. Acts as a Zn(2+):proton symporter, which likely mediates zinc ion uptake. In Pectobacterium atrosepticum (strain SCRI 1043 / ATCC BAA-672) (Erwinia carotovora subsp. atroseptica), this protein is Zinc transport protein ZntB.